The sequence spans 423 residues: MDIEVKKKRFLKGVISVPGDKSISHRAVMIGSIAEGITEIENFLLGEDCISTINCMKNLGVDIELKGTNVKVQGKGLYLNKSEKILDVGNSGTTIRLLMGILAGQKFETTLTGDDSIKRRPMGRVITPLSMMGAKIEAREGNFAPLTVFGNKLKGIYYKMPIASAQVKSSIMLASLYADDKTTIEEPYPSRNHTELMFSSFGAKVEVNGTKITCYPGYKLQGQKVIVPGDISSAAYFIVAATLVPNSEVTIKNVNVNPTRTGIIDVIKEMGGDIVLTNERTINNEKVADITVKTSRLKGIEIGGSLIPRLIDEIPVIAVAAVFAEGKTVIKDAEELKVKESNRINTITSELKKMGAKIFETEDGMIIEGTGFLKGNTVESYNDHRIAMSLWVAGLMAEGETKIKNAECVNISYPDFYKTFDML.

Residues Lys-21, Ser-22, and Arg-26 each contribute to the 3-phosphoshikimate site. Lys-21 lines the phosphoenolpyruvate pocket. Positions 92 and 120 each coordinate phosphoenolpyruvate. 3-phosphoshikimate is bound by residues Ser-164, Gln-166, Asp-312, and Lys-339. Gln-166 lines the phosphoenolpyruvate pocket. The active-site Proton acceptor is Asp-312. 2 residues coordinate phosphoenolpyruvate: Arg-343 and Arg-385.

It belongs to the EPSP synthase family. As to quaternary structure, monomer.

The protein resides in the cytoplasm. It carries out the reaction 3-phosphoshikimate + phosphoenolpyruvate = 5-O-(1-carboxyvinyl)-3-phosphoshikimate + phosphate. It participates in metabolic intermediate biosynthesis; chorismate biosynthesis; chorismate from D-erythrose 4-phosphate and phosphoenolpyruvate: step 6/7. Catalyzes the transfer of the enolpyruvyl moiety of phosphoenolpyruvate (PEP) to the 5-hydroxyl of shikimate-3-phosphate (S3P) to produce enolpyruvyl shikimate-3-phosphate and inorganic phosphate. This Thermoanaerobacter pseudethanolicus (strain ATCC 33223 / 39E) (Clostridium thermohydrosulfuricum) protein is 3-phosphoshikimate 1-carboxyvinyltransferase.